The chain runs to 217 residues: 3,4-dihydroxy-2-butanone 4-phosphate synthase (217 aa).

D-ribulose 5-phosphate contacts are provided by residues 37 to 38 (RE), D42, 150 to 154 (RGGHT), and E174. E38 contributes to the Mg(2+) binding site. Residue H153 coordinates Mg(2+).

It belongs to the DHBP synthase family. As to quaternary structure, homodimer. It depends on Mg(2+) as a cofactor. The cofactor is Mn(2+).

It catalyses the reaction D-ribulose 5-phosphate = (2S)-2-hydroxy-3-oxobutyl phosphate + formate + H(+). It functions in the pathway cofactor biosynthesis; riboflavin biosynthesis; 2-hydroxy-3-oxobutyl phosphate from D-ribulose 5-phosphate: step 1/1. Its function is as follows. Catalyzes the conversion of D-ribulose 5-phosphate to formate and 3,4-dihydroxy-2-butanone 4-phosphate. This chain is 3,4-dihydroxy-2-butanone 4-phosphate synthase, found in Salmonella paratyphi A (strain ATCC 9150 / SARB42).